The sequence spans 258 residues: Ubiquinone/menaquinone biosynthesis C-methyltransferase UbiE (258 aa).

Residues 1–21 (MSESRTSADGGMETSYGFREV) are disordered. Residues T81, D102, and 130-131 (NA) each bind S-adenosyl-L-methionine.

It belongs to the class I-like SAM-binding methyltransferase superfamily. MenG/UbiE family.

It catalyses the reaction a 2-demethylmenaquinol + S-adenosyl-L-methionine = a menaquinol + S-adenosyl-L-homocysteine + H(+). The catalysed reaction is a 2-methoxy-6-(all-trans-polyprenyl)benzene-1,4-diol + S-adenosyl-L-methionine = a 5-methoxy-2-methyl-3-(all-trans-polyprenyl)benzene-1,4-diol + S-adenosyl-L-homocysteine + H(+). It participates in quinol/quinone metabolism; menaquinone biosynthesis; menaquinol from 1,4-dihydroxy-2-naphthoate: step 2/2. Its pathway is cofactor biosynthesis; ubiquinone biosynthesis. Functionally, methyltransferase required for the conversion of demethylmenaquinol (DMKH2) to menaquinol (MKH2) and the conversion of 2-polyprenyl-6-methoxy-1,4-benzoquinol (DDMQH2) to 2-polyprenyl-3-methyl-6-methoxy-1,4-benzoquinol (DMQH2). This chain is Ubiquinone/menaquinone biosynthesis C-methyltransferase UbiE, found in Rhizobium johnstonii (strain DSM 114642 / LMG 32736 / 3841) (Rhizobium leguminosarum bv. viciae).